Reading from the N-terminus, the 345-residue chain is S-adenosylmethionine:tRNA ribosyltransferase-isomerase (345 aa).

It belongs to the QueA family. In terms of assembly, monomer.

The protein resides in the cytoplasm. It catalyses the reaction 7-aminomethyl-7-carbaguanosine(34) in tRNA + S-adenosyl-L-methionine = epoxyqueuosine(34) in tRNA + adenine + L-methionine + 2 H(+). It participates in tRNA modification; tRNA-queuosine biosynthesis. Transfers and isomerizes the ribose moiety from AdoMet to the 7-aminomethyl group of 7-deazaguanine (preQ1-tRNA) to give epoxyqueuosine (oQ-tRNA). The protein is S-adenosylmethionine:tRNA ribosyltransferase-isomerase of Acinetobacter baumannii (strain ATCC 17978 / DSM 105126 / CIP 53.77 / LMG 1025 / NCDC KC755 / 5377).